The primary structure comprises 166 residues: Large ribosomal subunit protein uL10 (166 aa).

It belongs to the universal ribosomal protein uL10 family. As to quaternary structure, part of the ribosomal stalk of the 50S ribosomal subunit. The N-terminus interacts with L11 and the large rRNA to form the base of the stalk. The C-terminus forms an elongated spine to which L12 dimers bind in a sequential fashion forming a multimeric L10(L12)X complex.

Forms part of the ribosomal stalk, playing a central role in the interaction of the ribosome with GTP-bound translation factors. In Ureaplasma urealyticum serovar 10 (strain ATCC 33699 / Western), this protein is Large ribosomal subunit protein uL10.